A 597-amino-acid polypeptide reads, in one-letter code: Adenine deaminase 2 (597 aa).

This sequence belongs to the metallo-dependent hydrolases superfamily. Adenine deaminase family. Mn(2+) serves as cofactor.

The enzyme catalyses adenine + H2O + H(+) = hypoxanthine + NH4(+). This is Adenine deaminase 2 from Agrobacterium fabrum (strain C58 / ATCC 33970) (Agrobacterium tumefaciens (strain C58)).